A 354-amino-acid polypeptide reads, in one-letter code: 3-dehydroquinate synthase (354 aa).

NAD(+)-binding positions include 106–110, 130–131, Lys143, and Lys152; these read GVIGD and TS. Residues Glu185, His246, and His262 each contribute to the Zn(2+) site.

It belongs to the sugar phosphate cyclases superfamily. Dehydroquinate synthase family. Requires Co(2+) as cofactor. Zn(2+) is required as a cofactor. The cofactor is NAD(+).

It is found in the cytoplasm. It catalyses the reaction 7-phospho-2-dehydro-3-deoxy-D-arabino-heptonate = 3-dehydroquinate + phosphate. Its pathway is metabolic intermediate biosynthesis; chorismate biosynthesis; chorismate from D-erythrose 4-phosphate and phosphoenolpyruvate: step 2/7. Functionally, catalyzes the conversion of 3-deoxy-D-arabino-heptulosonate 7-phosphate (DAHP) to dehydroquinate (DHQ). In Leuconostoc mesenteroides subsp. mesenteroides (strain ATCC 8293 / DSM 20343 / BCRC 11652 / CCM 1803 / JCM 6124 / NCDO 523 / NBRC 100496 / NCIMB 8023 / NCTC 12954 / NRRL B-1118 / 37Y), this protein is 3-dehydroquinate synthase.